Consider the following 287-residue polypeptide: Cbb3-type cytochrome c oxidase subunit FixP (287 aa).

The Cytoplasmic segment spans residues 1 to 33 (MSQKHIDELSGVETTGHEWDGIQELNNPMPRWW). The helical transmembrane segment at 34–54 (IWTFYVTILWAIGYAIAYPAI) threads the bilayer. At 55-287 (PMITSATNGY…IFVHALGGGT (233 aa)) the chain is on the periplasmic side. Cytochrome c domains follow at residues 108-196 (FAIA…WGLT) and 203-284 (GLAA…HALG). Heme c-binding residues include C121, C124, H125, M173, C216, C219, H220, and M261.

The protein belongs to the CcoP / FixP family. As to quaternary structure, component of the cbb3-type cytochrome c oxidase at least composed of FixN, FixO, FixQ and FixP. Heme c serves as cofactor.

It localises to the cell inner membrane. It functions in the pathway energy metabolism; oxidative phosphorylation. Functionally, C-type cytochrome. Part of the cbb3-type cytochrome c oxidase complex. FixP subunit is required for transferring electrons from donor cytochrome c via its heme groups to FixO subunit. From there, electrons are shuttled to the catalytic binuclear center of FixN subunit where oxygen reduction takes place. The complex also functions as a proton pump. This chain is Cbb3-type cytochrome c oxidase subunit FixP, found in Rhizobium etli (strain ATCC 51251 / DSM 11541 / JCM 21823 / NBRC 15573 / CFN 42).